A 330-amino-acid chain; its full sequence is uncharacterized protein (330 aa).

125-132 is an ATP binding site; sequence GPPGCGKT.

Belongs to the AAA ATPase family.

This is an uncharacterized protein from Sinorhizobium fredii (strain NBRC 101917 / NGR234).